The chain runs to 572 residues: Oxygen-dependent choline dehydrogenase (572 aa).

7 to 36 (DYIIIGAGSAGNVLATRLTEDRDVTVLLLE) serves as a coordination point for FAD. The Proton acceptor role is filled by His-474.

It belongs to the GMC oxidoreductase family. Requires FAD as cofactor.

It catalyses the reaction choline + A = betaine aldehyde + AH2. The enzyme catalyses betaine aldehyde + NAD(+) + H2O = glycine betaine + NADH + 2 H(+). It functions in the pathway amine and polyamine biosynthesis; betaine biosynthesis via choline pathway; betaine aldehyde from choline (cytochrome c reductase route): step 1/1. Its function is as follows. Involved in the biosynthesis of the osmoprotectant glycine betaine. Catalyzes the oxidation of choline to betaine aldehyde and betaine aldehyde to glycine betaine at the same rate. The polypeptide is Oxygen-dependent choline dehydrogenase (Paraburkholderia phymatum (strain DSM 17167 / CIP 108236 / LMG 21445 / STM815) (Burkholderia phymatum)).